Consider the following 393-residue polypeptide: Staphopain B (393 aa).

A signal peptide spans 1–36; it reads MNSSCKSRVFNIISIIMVSMLILSLGAFANNNKAKA. The propeptide occupies 37-219; it reads DSHSKQLEIN…KVEENEAIQE (183 aa). Residues cysteine 243, histidine 340, and asparagine 360 contribute to the active site.

Belongs to the peptidase C47 family. In terms of assembly, in the cytoplasm, prematurely activated/folded SspB forms a stable non-covalent complex with SspC. Post-translationally, proteolytically cleaved by staphylococcal serine protease (SspA).

The protein localises to the secreted. Its activity is regulated as follows. Prematurely activated/folded staphopain B is inhibited by staphostatin B (SspC), which is probably required to protect staphylococcal cytoplasmic proteins from degradation by SspB. Also inactivated by E-64 and stimulated by EDTA. Its function is as follows. Cysteine protease that plays an important role in the inhibition of host innate immune response. Degrades host elastin, fibrogen, fibronectin and kininogen. Blocks phagocytosis of opsonised S.aureus by neutrophils and monocytes by inducing their death in a proteolytic activity-dependent manner. Decreases surface expression of the 'don't eat me' signal CD31 on neutrophils. Cleaves host galectin-3/LGALS3, thereby inhibiting the neutrophil-activating ability of the lectin. The chain is Staphopain B (sspB) from Staphylococcus aureus (strain NCTC 8325 / PS 47).